Reading from the N-terminus, the 341-residue chain is Anthranilate phosphoribosyltransferase (341 aa).

Residues Gly79, 82–83 (GD), Thr87, 89–92 (NIST), 107–115 (KHGNRAASS), and Ser119 each bind 5-phospho-alpha-D-ribose 1-diphosphate. Gly79 is an anthranilate binding site. Ser91 provides a ligand contact to Mg(2+). Residue Asn110 participates in anthranilate binding. Arg165 is an anthranilate binding site. Mg(2+) contacts are provided by Asp224 and Glu225.

Belongs to the anthranilate phosphoribosyltransferase family. Homodimer. It depends on Mg(2+) as a cofactor.

It catalyses the reaction N-(5-phospho-beta-D-ribosyl)anthranilate + diphosphate = 5-phospho-alpha-D-ribose 1-diphosphate + anthranilate. Its pathway is amino-acid biosynthesis; L-tryptophan biosynthesis; L-tryptophan from chorismate: step 2/5. Its function is as follows. Catalyzes the transfer of the phosphoribosyl group of 5-phosphorylribose-1-pyrophosphate (PRPP) to anthranilate to yield N-(5'-phosphoribosyl)-anthranilate (PRA). The sequence is that of Anthranilate phosphoribosyltransferase from Dehalococcoides mccartyi (strain ATCC BAA-2266 / KCTC 15142 / 195) (Dehalococcoides ethenogenes (strain 195)).